The primary structure comprises 813 residues: Nuclear pore complex protein 5 (813 aa).

It belongs to the nucleoporin Nup84/Nup107 family. As to quaternary structure, part of the nuclear pore complex (NPC). May interact with mdf-1.

Its subcellular location is the nucleus. It localises to the nuclear pore complex. The protein localises to the chromosome. It is found in the centromere. The protein resides in the kinetochore. Its subcellular location is the nucleus membrane. Its function is as follows. Involved in kinetochore assembly and chromosome segregation during embryonic mitosis. Required for the localization of the NDC80 complex member him-10, the chromosomal passenger complex component air-2 and nuclear pore complex proteins npp-23 and npp-15 to kinetochores during metaphase. Required for npp-23 localization to the nuclear envelope during interphase. Recruits mdf-1, a component of the spindle assembly checkpoint, to the nuclear envelope. Appears dispensable for the assembly of the nuclear pore complex and for nuclear protein import. The sequence is that of Nuclear pore complex protein 5 from Caenorhabditis elegans.